A 190-amino-acid chain; its full sequence is dCTP deaminase, dUMP-forming (190 aa).

Residues Lys101 to Arg106, Asp119, Thr127 to Glu129, Gln148, Tyr162, Lys170, and Gln174 each bind dCTP. Glu129 (proton donor/acceptor) is an active-site residue. A disordered region spans residues His160–Thr190. The segment covering Tyr171–Thr190 has biased composition (polar residues).

It belongs to the dCTP deaminase family. As to quaternary structure, homotrimer.

It carries out the reaction dCTP + 2 H2O = dUMP + NH4(+) + diphosphate. It functions in the pathway pyrimidine metabolism; dUMP biosynthesis; dUMP from dCTP: step 1/1. Functionally, bifunctional enzyme that catalyzes both the deamination of dCTP to dUTP and the hydrolysis of dUTP to dUMP without releasing the toxic dUTP intermediate. The chain is dCTP deaminase, dUMP-forming from Mycobacterium tuberculosis (strain ATCC 25177 / H37Ra).